The sequence spans 111 residues: Ribonuclease P protein component (111 aa).

The protein belongs to the RnpA family. In terms of assembly, consists of a catalytic RNA component (M1 or rnpB) and a protein subunit.

The enzyme catalyses Endonucleolytic cleavage of RNA, removing 5'-extranucleotides from tRNA precursor.. In terms of biological role, RNaseP catalyzes the removal of the 5'-leader sequence from pre-tRNA to produce the mature 5'-terminus. It can also cleave other RNA substrates such as 4.5S RNA. The protein component plays an auxiliary but essential role in vivo by binding to the 5'-leader sequence and broadening the substrate specificity of the ribozyme. This Mycoplasmopsis pulmonis (strain UAB CTIP) (Mycoplasma pulmonis) protein is Ribonuclease P protein component.